A 207-amino-acid polypeptide reads, in one-letter code: ATP-dependent Clp protease proteolytic subunit (207 aa).

The Nucleophile role is filled by S111. H136 is a catalytic residue.

It belongs to the peptidase S14 family. As to quaternary structure, fourteen ClpP subunits assemble into 2 heptameric rings which stack back to back to give a disk-like structure with a central cavity, resembling the structure of eukaryotic proteasomes.

The protein localises to the cytoplasm. The catalysed reaction is Hydrolysis of proteins to small peptides in the presence of ATP and magnesium. alpha-casein is the usual test substrate. In the absence of ATP, only oligopeptides shorter than five residues are hydrolyzed (such as succinyl-Leu-Tyr-|-NHMec, and Leu-Tyr-Leu-|-Tyr-Trp, in which cleavage of the -Tyr-|-Leu- and -Tyr-|-Trp bonds also occurs).. Functionally, cleaves peptides in various proteins in a process that requires ATP hydrolysis. Has a chymotrypsin-like activity. Plays a major role in the degradation of misfolded proteins. The sequence is that of ATP-dependent Clp protease proteolytic subunit from Psychromonas ingrahamii (strain DSM 17664 / CCUG 51855 / 37).